A 317-amino-acid polypeptide reads, in one-letter code: tRNA pseudouridine synthase B (317 aa).

The active-site Nucleophile is the D47.

The protein belongs to the pseudouridine synthase TruB family. Type 1 subfamily.

It carries out the reaction uridine(55) in tRNA = pseudouridine(55) in tRNA. Functionally, responsible for synthesis of pseudouridine from uracil-55 in the psi GC loop of transfer RNAs. In Shewanella frigidimarina (strain NCIMB 400), this protein is tRNA pseudouridine synthase B.